We begin with the raw amino-acid sequence, 882 residues long: Homeobox-leucine zipper protein ROC3 (882 aa).

The segment at 104–144 (DVDDDHKPQHSGHDQPPDAAQPSGAAGGNAKKKRYHRHTAH) is disordered. A compositionally biased stretch (basic and acidic residues) spans 107 to 119 (DDHKPQHSGHDQP). Over residues 133-143 (AKKKRYHRHTA) the composition is skewed to basic residues. Positions 134 to 193 (KKKRYHRHTAHQIQQMEALFKECPHPDDKQRLKLSQELGLKPRQVKFWFQNRRTQMKAQQ) form a DNA-binding region, homeobox. A coiled-coil region spans residues 200-263 (ILRAENENLK…LDRLACIATR (64 aa)). Positions 340–584 (QEQDKQLVVD…LQRQCERLAS (245 aa)) constitute an START domain. Residues 782–816 (AAAPTISSSTTTTTGNGNGETSSTPPRNSSSNNNN) are compositionally biased toward low complexity. The segment at 782–820 (AAAPTISSSTTTTTGNGNGETSSTPPRNSSSNNNNADEL) is disordered.

It belongs to the HD-ZIP homeobox family. Class IV subfamily.

The protein resides in the nucleus. Its function is as follows. Probable transcription factor. This is Homeobox-leucine zipper protein ROC3 (ROC3) from Oryza sativa subsp. japonica (Rice).